A 216-amino-acid chain; its full sequence is Putative flagellar filament outer layer-like protein (216 aa).

Positions 1-22 (MFAQDAAQTGEQTTQNQGENGN) are disordered. The span at 8-22 (QTGEQTTQNQGENGN) shows a compositional bias: low complexity.

The protein localises to the periplasmic flagellum. The protein resides in the periplasm. In terms of biological role, might be part of the flagella. This Brachyspira hyodysenteriae (strain ATCC 49526 / WA1) protein is Putative flagellar filament outer layer-like protein (flaAL).